The sequence spans 352 residues: Biotin synthase (352 aa).

A Radical SAM core domain is found at 44–262 (NRVQVSTLLS…LAVARIMMPK (219 aa)). Residues cysteine 59, cysteine 63, and cysteine 66 each coordinate [4Fe-4S] cluster. Residues cysteine 103, cysteine 134, cysteine 194, and arginine 266 each coordinate [2Fe-2S] cluster.

The protein belongs to the radical SAM superfamily. Biotin synthase family. Homodimer. Requires [4Fe-4S] cluster as cofactor. [2Fe-2S] cluster serves as cofactor.

The enzyme catalyses (4R,5S)-dethiobiotin + (sulfur carrier)-SH + 2 reduced [2Fe-2S]-[ferredoxin] + 2 S-adenosyl-L-methionine = (sulfur carrier)-H + biotin + 2 5'-deoxyadenosine + 2 L-methionine + 2 oxidized [2Fe-2S]-[ferredoxin]. The protein operates within cofactor biosynthesis; biotin biosynthesis; biotin from 7,8-diaminononanoate: step 2/2. Functionally, catalyzes the conversion of dethiobiotin (DTB) to biotin by the insertion of a sulfur atom into dethiobiotin via a radical-based mechanism. This Ectopseudomonas mendocina (strain ymp) (Pseudomonas mendocina) protein is Biotin synthase.